Reading from the N-terminus, the 534-residue chain is Inorganic phosphate transporter 1-4 (534 aa).

Residues 1–24 (MAREQLQVLNALDVAKTQWYHFTA) are Cytoplasmic-facing. The helical transmembrane segment at 25–45 (IIIAGMGFFTDAYDLFCISLV) threads the bilayer. Topologically, residues 46-70 (TKLLGRIYYHVEGAQKPGTLPPNVA) are extracellular. A helical membrane pass occupies residues 71-91 (AAVNGVAFCGTLAGQLFFGWL). Over 92–99 (GDKLGRKK) the chain is Cytoplasmic. A helical transmembrane segment spans residues 100-120 (VYGMTLMVMVLCSIASGLSFG). Residues 121-131 (HEPKAVMATLC) lie on the Extracellular side of the membrane. A helical membrane pass occupies residues 132–152 (FFRFWLGFGIGGDYPLSATIM). Residues 153–161 (SEYANKKTR) lie on the Cytoplasmic side of the membrane. A helical transmembrane segment spans residues 162-182 (GAFVSAVFAMQGFGIMAGGIF). Residues 183–211 (AIIISSAFEAKFPSPAYADDALGSTIPQA) lie on the Extracellular side of the membrane. Residues 212–232 (DLVWRIILMAGAIPAAMTYYS) form a helical membrane-spanning segment. Residues 233-293 (RSKMPETARY…GLFSKEFMSR (61 aa)) lie on the Cytoplasmic side of the membrane. A helical membrane pass occupies residues 294–314 (HGLHLLGTTSTWFLLDIAFYS). Residues 315-349 (QNLFQKDIFSAIGWIPPAQSMNAIQEVFKIARAQT) lie on the Extracellular side of the membrane. The helical transmembrane segment at 350-370 (LIALCSTVPGYWFTVAFIDVI) threads the bilayer. At 371–372 (GR) the chain is on the cytoplasmic side. A helical transmembrane segment spans residues 373–393 (FAIQMMGFFFMTVFMFALAIP). At 394–403 (YNHWTHKENR) the chain is on the extracellular side. The chain crosses the membrane as a helical span at residues 404–424 (IGFVIMYSLTFFFANFGPNAT). The Cytoplasmic segment spans residues 425-442 (TFVVPAEIFPARFRSTCH). A helical membrane pass occupies residues 443–463 (GISAASGKLGAMVGAFGFLYL). Over 464–484 (AQNPDKDKTDAGYPPGIGVRN) the chain is Extracellular. The helical transmembrane segment at 485-505 (SLIVLGVVNFLGILFTFLVPE) threads the bilayer. Residues 506–534 (SKGKSLEEMSGENEDNENSNNDSRTVPIV) are Cytoplasmic-facing. The interval 512 to 534 (EEMSGENEDNENSNNDSRTVPIV) is disordered. S524 and S528 each carry phosphoserine.

It belongs to the major facilitator superfamily. Phosphate:H(+) symporter (TC 2.A.1.9) family. As to quaternary structure, interacts with NLA. Ubiquitinated by NLA. Ubiquitination of PHT1-4 leads to its degradation by the proteasome. As to expression, mostly expressed in roots, in tissues connecting the lateral roots to the primary root. Also present in flowers, in senescing anther filaments and in the abscission zone at the base of siliques. Expressed in hydathodes and axillary buds, and in some senescing leaves. After Pi starvation, localized in all cells of undifferentiated root segments, including root tips and root hairs, and in the epidermis, cortex and stellar regions of mature root segments.

It localises to the cell membrane. Functionally, high-affinity transporter for external inorganic phosphate. Acts as a H(+):phosphate symporter in both low- and high-Pi conditions. Confers sensitivity to arsenate. The chain is Inorganic phosphate transporter 1-4 (PHT1-4) from Arabidopsis thaliana (Mouse-ear cress).